The following is a 797-amino-acid chain: Probable DNA polymerase (797 aa).

The protein belongs to the DNA polymerase type-B family.

The protein localises to the mitochondrion. The catalysed reaction is DNA(n) + a 2'-deoxyribonucleoside 5'-triphosphate = DNA(n+1) + diphosphate. The polypeptide is Probable DNA polymerase (Agaricus bitorquis (Pavement mushroom)).